The chain runs to 772 residues: Subtilisin-like protease SBT5.3 (772 aa).

The first 25 residues, Met-1–Ala-25, serve as a signal peptide directing secretion. An Inhibitor I9 domain is found at Ser-31–His-116. The 509-residue stretch at Ser-120 to Val-628 folds into the Peptidase S8 domain. The Charge relay system role is filled by Asp-153. N-linked (GlcNAc...) asparagine glycosylation occurs at Asn-211. His-223 acts as the Charge relay system in catalysis. N-linked (GlcNAc...) asparagine glycans are attached at residues Asn-246, Asn-306, and Asn-396. Residues Ser-398–Ile-480 enclose the PA domain. Ser-561 acts as the Charge relay system in catalysis. Residues Asn-606, Asn-651, Asn-662, Asn-684, and Asn-725 are each glycosylated (N-linked (GlcNAc...) asparagine).

The protein belongs to the peptidase S8 family. In terms of tissue distribution, expressed specifically at sites of lateral root emergence.

The protein resides in the secreted. The protein localises to the cell wall. Its function is as follows. Serine protease. Has a substrate preference for the hydrophobic residues Phe and Ala and the basic residue Asp in the P1 position, and for Asp, Leu or Ala in the P1' position. May play a role in the degradation of structural proteins in the extracellular matrix of cells located above sites of lateral root formation and thus facilitate lateral root emergence. The protein is Subtilisin-like protease SBT5.3 (AIR3) of Arabidopsis thaliana (Mouse-ear cress).